The sequence spans 317 residues: MHNYLDFEKPISDLEGKIHELKKLASEDESIDTSDEVGRLEIRVRESMADIYSKLNAWQKTQVARHPQRPHFVDYAKALFTEFTPLAGDRKFSEDAAIQAGFARFRGQPVAVLGQEKGNDTKSRLKHNFGSARPEGYRKAIRILEMADRFQLPVITLVDTAGAYPGVGAEERGQAEAIARSTEMCLGLKVPIISVVIGEGGSGGAIAIAVGNRVYMLEHSIYSVISPEGAASILWRDSTRAKEAATNMKITAEDLKGLGIIDGIIPEPLGGAHRDPQTVIAAAGDVISNALGELSSRSGEQLRSDRRQKFLNMGRNL.

The 251-residue stretch at 43-293 (RVRESMADIY…GDVISNALGE (251 aa)) folds into the CoA carboxyltransferase C-terminal domain.

This sequence belongs to the AccA family. As to quaternary structure, acetyl-CoA carboxylase is a heterohexamer composed of biotin carboxyl carrier protein (AccB), biotin carboxylase (AccC) and two subunits each of ACCase subunit alpha (AccA) and ACCase subunit beta (AccD).

It is found in the cytoplasm. The enzyme catalyses N(6)-carboxybiotinyl-L-lysyl-[protein] + acetyl-CoA = N(6)-biotinyl-L-lysyl-[protein] + malonyl-CoA. The protein operates within lipid metabolism; malonyl-CoA biosynthesis; malonyl-CoA from acetyl-CoA: step 1/1. Its function is as follows. Component of the acetyl coenzyme A carboxylase (ACC) complex. First, biotin carboxylase catalyzes the carboxylation of biotin on its carrier protein (BCCP) and then the CO(2) group is transferred by the carboxyltransferase to acetyl-CoA to form malonyl-CoA. This chain is Acetyl-coenzyme A carboxylase carboxyl transferase subunit alpha, found in Rhizobium rhizogenes (strain K84 / ATCC BAA-868) (Agrobacterium radiobacter).